The primary structure comprises 92 residues: PqqA binding protein (92 aa).

The protein belongs to the PqqD family. Monomer. Interacts with PqqE.

It participates in cofactor biosynthesis; pyrroloquinoline quinone biosynthesis. Its function is as follows. Functions as a PqqA binding protein and presents PqqA to PqqE, in the pyrroloquinoline quinone (PQQ) biosynthetic pathway. This chain is PqqA binding protein, found in Xanthomonas euvesicatoria pv. vesicatoria (strain 85-10) (Xanthomonas campestris pv. vesicatoria).